The primary structure comprises 175 residues: Ribosome maturation factor RimM (175 aa).

In terms of domain architecture, PRC barrel spans 96–175; that stretch reads EGDYYWHDLI…TITVDWDAGF (80 aa).

This sequence belongs to the RimM family. Binds ribosomal protein uS19.

It localises to the cytoplasm. Functionally, an accessory protein needed during the final step in the assembly of 30S ribosomal subunit, possibly for assembly of the head region. Essential for efficient processing of 16S rRNA. May be needed both before and after RbfA during the maturation of 16S rRNA. It has affinity for free ribosomal 30S subunits but not for 70S ribosomes. This Actinobacillus pleuropneumoniae serotype 5b (strain L20) protein is Ribosome maturation factor RimM.